A 426-amino-acid polypeptide reads, in one-letter code: Fc receptor-like B (426 aa).

The N-terminal stretch at 1–17 (MWPLTALLLLVPSSGQA) is a signal peptide. Ig-like C2-type domains lie at 23 to 101 (PILS…LSVS) and 103 to 189 (DWLI…VAVT). 2 cysteine pairs are disulfide-bonded: Cys44–Cys85 and Cys124–Cys168. An N-linked (GlcNAc...) asparagine glycan is attached at Asn152. Positions 400 to 426 (ELRGTPETPTSHFAVSPGTPETTPVES) are disordered. A compositionally biased stretch (polar residues) spans 406-426 (ETPTSHFAVSPGTPETTPVES).

In terms of tissue distribution, expressed at low levels. Expressed in B-lymphocytes. Detected in tonsil, lung, kidney, spleen and placenta. Expressed by a small subset of germinal center B-cells in tonsils and by melanocytes (at protein level).

The protein localises to the cytoplasm. Its subcellular location is the endoplasmic reticulum. This chain is Fc receptor-like B (FCRLB), found in Homo sapiens (Human).